The chain runs to 1004 residues: MGPLWFCCLPLALLPLLAAVEETLMDSTTATAELGWMVHPPSGWEEVSGYDENMNTIRTYQVCNVFESSQNNWLRTKYIRRRGAHRIHVEMKFSVRDCSSIPNVPGSCKETFNLYYYESDFDSATKTFPNWMENPWMKVDTIAADESFSQVDLGGRVMKINTEVRSFGPVSKNGFYLAFQDYGGCMSLIAVRVFYRKCPRVIQNGAVFQETLSGAESTSLVAARGTCISNAEEVDVPIKLYCNGDGEWLVPIGRCMCRPGYESVENGTVCRGCPSGTFKASQGDEGCVHCPINSRTTSEGATNCVCRNGYYRADADPVDMPCTTIPSAPQAVISSVNETSLMLEWTPPRDSGGREDLVYNIICKSCGSGRGACTRCGDNVQFAPRQLGLTEPRIYISDLLAHTQYTFEIQAVNGVTDQSPFSPQFASVNITTNQAAPSAVSIMHQVSRTVDSITLSWSQPDQPNGVILDYELQYYEKNLSELNSTAVKSPTNTVTVQNLKAGTIYVFQVRARTVAGYGRYSGKMYFQTMTEAEYQTSVQEKLPLIIGSSAAGLVFLIAVVVIIIVCNRRRGFERADSEYTDKLQHYTSGHSTYRGPPPGLGVRLFVMTPGMKIYIDPFTYEDPNEAVREFAKEIDISCVKIEQVIGAGEFGEVCSGHLKLPGKREIFVAIKTLKSGYTEKQRRDFLSEASIMGQFDHPNVIHLEGVVTKSSPVMIITEFMENGSLDSFLRQNDGQFTVIQLVGMLRGIAAGMKYLADMNYVHRDLAARNILVNSNLVCKVSDFGLSRFLEDDTSDPTYTSALGGKIPIRWTAPEAIQYRKFTSASDVWSYGIVMWEVMSYGERPYWDMTNQDVINAIEQDYRLPPPMDCPNALHQLMLDCWQKDRNHRPKFGQIVNTLDKMIRNPNSLKAMAPLSSGVNLPLLDRTIPDYTSFNTVDEWLDAIKMSQYKESFASAGFTTFDIVSQMTVEDILRVGVTLAGHQKKILNSIQVMRAQMNQIQSVEV.

The N-terminal stretch at 1 to 19 is a signal peptide; it reads MGPLWFCCLPLALLPLLAA. Residues 20–544 are Extracellular-facing; sequence VEETLMDSTT…QTSVQEKLPL (525 aa). The region spanning 21 to 203 is the Eph LBD domain; sequence EETLMDSTTA…FYRKCPRVIQ (183 aa). Intrachain disulfides connect cysteine 63–cysteine 185 and cysteine 98–cysteine 108. Residues asparagine 266, asparagine 337, asparagine 429, asparagine 478, and asparagine 483 are each glycosylated (N-linked (GlcNAc...) asparagine). 2 consecutive Fibronectin type-III domains span residues 325–435 and 436–531; these read IPSA…TNQA and APSA…TMTE. Residues 545–565 traverse the membrane as a helical segment; sequence IIGSSAAGLVFLIAVVVIIIV. At 566–1004 the chain is on the cytoplasmic side; sequence CNRRRGFERA…QMNQIQSVEV (439 aa). The Protein kinase domain maps to 639–902; the sequence is VKIEQVIGAG…QIVNTLDKMI (264 aa). Residues 645–653 and lysine 671 each bind ATP; that span reads IGAGEFGEV. Residue aspartate 764 is the Proton acceptor of the active site. Residues 931-995 form the SAM domain; the sequence is TSFNTVDEWL…LNSIQVMRAQ (65 aa). Residues 1002–1004 carry the PDZ-binding motif; it reads VEV.

The protein belongs to the protein kinase superfamily. Tyr protein kinase family. Ephrin receptor subfamily. Heterotetramer upon binding of the ligand. The heterotetramer is composed of an ephrin dimer and a receptor dimer. Oligomerization is probably required to induce biological responses. Ligand binding induces cleavage by matrix metalloproteinases (MMPs) such as MMP7/MMP9, producing an EphB2/N-terminal fragment (NTF) and a C-terminal long fragment (EphB2-LF). EphB2-LF is further cleaved by MMPs, producing EphB2/CTF1 which is further cleaved by the PS1/gamma-secretase producing EphB2/CTF2. As to expression, wide tissue distribution throughout development and sustained expression in adult brain. The longer form (CEK5+) is specifically expressed in the central nervous system.

The protein resides in the cell membrane. Its subcellular location is the cell projection. It localises to the axon. It is found in the dendrite. It carries out the reaction L-tyrosyl-[protein] + ATP = O-phospho-L-tyrosyl-[protein] + ADP + H(+). Functionally, receptor tyrosine kinase which binds promiscuously transmembrane ephrin-B family ligands residing on adjacent cells, leading to contact-dependent bidirectional signaling into neighboring cells. The signaling pathway downstream of the receptor is referred to as forward signaling while the signaling pathway downstream of the ephrin ligand is referred to as reverse signaling. Functions in axon guidance during development. In addition to axon guidance, also regulates dendritic spines development and maturation and stimulates the formation of excitatory synapses. The chain is Ephrin type-B receptor 2 (EPHB2) from Gallus gallus (Chicken).